Reading from the N-terminus, the 268-residue chain is Bis(5'-nucleosyl)-tetraphosphatase, symmetrical (268 aa).

The protein belongs to the Ap4A hydrolase family.

It catalyses the reaction P(1),P(4)-bis(5'-adenosyl) tetraphosphate + H2O = 2 ADP + 2 H(+). Functionally, hydrolyzes diadenosine 5',5'''-P1,P4-tetraphosphate to yield ADP. This chain is Bis(5'-nucleosyl)-tetraphosphatase, symmetrical, found in Vibrio parahaemolyticus serotype O3:K6 (strain RIMD 2210633).